The primary structure comprises 232 residues: 5'-methylthioadenosine/S-adenosylhomocysteine nucleosidase (232 aa).

The active-site Proton acceptor is the glutamate 12. Residues glycine 78, methionine 153, and 174-175 (ME) contribute to the substrate site. Aspartate 198 functions as the Proton donor in the catalytic mechanism.

Belongs to the PNP/UDP phosphorylase family. MtnN subfamily.

The catalysed reaction is S-adenosyl-L-homocysteine + H2O = S-(5-deoxy-D-ribos-5-yl)-L-homocysteine + adenine. It catalyses the reaction S-methyl-5'-thioadenosine + H2O = 5-(methylsulfanyl)-D-ribose + adenine. It carries out the reaction 5'-deoxyadenosine + H2O = 5-deoxy-D-ribose + adenine. Its pathway is amino-acid biosynthesis; L-methionine biosynthesis via salvage pathway; S-methyl-5-thio-alpha-D-ribose 1-phosphate from S-methyl-5'-thioadenosine (hydrolase route): step 1/2. Catalyzes the irreversible cleavage of the glycosidic bond in both 5'-methylthioadenosine (MTA) and S-adenosylhomocysteine (SAH/AdoHcy) to adenine and the corresponding thioribose, 5'-methylthioribose and S-ribosylhomocysteine, respectively. Also cleaves 5'-deoxyadenosine, a toxic by-product of radical S-adenosylmethionine (SAM) enzymes, into 5-deoxyribose and adenine. This chain is 5'-methylthioadenosine/S-adenosylhomocysteine nucleosidase, found in Anoxybacillus flavithermus (strain DSM 21510 / WK1).